The chain runs to 461 residues: DNA polymerase delta subunit 3 (461 aa).

Disordered regions lie at residues 148 to 229, 249 to 380, and 399 to 461; these read VAQA…SAKG, VPGQ…KRVL, and YESE…CQKK. Residues 155-172 are compositionally biased toward polar residues; it reads ARSSSQTPSDTSAVSTPP. A compositionally biased stretch (basic and acidic residues) spans 205 to 214; it reads DANKEPKAKE. Over residues 215-228 the composition is skewed to low complexity; it reads APSVSAASSKPSAK. Positions 279–304 are enriched in basic and acidic residues; the sequence is KPGRKTEPAKIQQKDKKSKMKRMDKS. Positions 371-380 are enriched in basic residues; sequence GKKRKRKRVL. Residues 427-436 are compositionally biased toward basic and acidic residues; that stretch reads VKKEPKEERK. A PIP-box motif is present at residues 451 to 458; it reads QISIMGFC.

In terms of assembly, component of both the DNA polymerase delta and DNA polymerase zeta complexes. The tetrameric DNA polymerase delta complex (Pol-delta4), which consists of POLD1/p125, POLD2/p50, POLD3/p66/p68 and POLD4/p12, with POLD1 bearing DNA polymerase and 3' to 5' proofreading exonuclease activities.

It is found in the cytoplasm. It localises to the nucleus. In terms of biological role, accessory component of both the DNA polymerase delta complex and the DNA polymerase zeta complex. As a component of the trimeric and tetrameric DNA polymerase delta complexes (Pol-delta3 and Pol-delta4, respectively), plays a role in high fidelity genome replication, including in lagging strand synthesis, and repair. Required for optimal Pol-delta activity. Stabilizes the Pol-delta complex and plays a major role in Pol-delta stimulation by PCNA. Pol-delta3 and Pol-delta4 are characterized by the absence or the presence of POLD4. They exhibit differences in catalytic activity. Most notably, Pol-delta3 shows higher proofreading activity than Pol-delta4. Although both Pol-delta3 and Pol-delta4 process Okazaki fragments in vitro, Pol-delta3 may also be better suited to fulfill this task, exhibiting near-absence of strand displacement activity compared to Pol-delta4 and stalling on encounter with the 5'-blocking oligonucleotides. Pol-delta3 idling process may avoid the formation of a gap, while maintaining a nick that can be readily ligated. Along with DNA polymerase kappa, DNA polymerase delta carries out approximately half of nucleotide excision repair (NER) synthesis following UV irradiation. In this context, POLD3, along with PCNA and RFC1-replication factor C complex, is required to recruit POLD1, the catalytic subunit of the polymerase delta complex, to DNA damage sites. Under conditions of DNA replication stress, required for the repair of broken replication forks through break-induced replication (BIR). Involved in the translesion synthesis (TLS) of templates carrying O6-methylguanine or abasic sites performed by Pol-delta4, independently of DNA polymerase zeta (REV3L) or eta (POLH). Facilitates abasic site bypass by DNA polymerase delta by promoting extension from the nucleotide inserted opposite the lesion. Also involved in TLS, as a component of the tetrameric DNA polymerase zeta complex. Along with POLD2, dramatically increases the efficiency and processivity of DNA synthesis of the DNA polymerase zeta complex compared to the minimal zeta complex, consisting of only REV3L and REV7. This chain is DNA polymerase delta subunit 3 (POLD3), found in Gallus gallus (Chicken).